A 392-amino-acid chain; its full sequence is Formate-dependent phosphoribosylglycinamide formyltransferase (392 aa).

N(1)-(5-phospho-beta-D-ribosyl)glycinamide-binding positions include 22-23 and E82; that span reads EL. Residues R114, K155, 160–165, 195–198, and E203 each bind ATP; these read SSGKGQ and EGVV. An ATP-grasp domain is found at 119–308; that stretch reads RLAAEELQLP…EFALHVRAFL (190 aa). Mg(2+)-binding residues include E267 and E279. Residues D286, K355, and 362 to 363 each bind N(1)-(5-phospho-beta-D-ribosyl)glycinamide; that span reads RR.

Belongs to the PurK/PurT family. Homodimer.

The enzyme catalyses N(1)-(5-phospho-beta-D-ribosyl)glycinamide + formate + ATP = N(2)-formyl-N(1)-(5-phospho-beta-D-ribosyl)glycinamide + ADP + phosphate + H(+). It functions in the pathway purine metabolism; IMP biosynthesis via de novo pathway; N(2)-formyl-N(1)-(5-phospho-D-ribosyl)glycinamide from N(1)-(5-phospho-D-ribosyl)glycinamide (formate route): step 1/1. Involved in the de novo purine biosynthesis. Catalyzes the transfer of formate to 5-phospho-ribosyl-glycinamide (GAR), producing 5-phospho-ribosyl-N-formylglycinamide (FGAR). Formate is provided by PurU via hydrolysis of 10-formyl-tetrahydrofolate. The polypeptide is Formate-dependent phosphoribosylglycinamide formyltransferase (Shigella flexneri).